A 71-amino-acid polypeptide reads, in one-letter code: Small ribosomal subunit protein bS21 (71 aa).

The protein belongs to the bacterial ribosomal protein bS21 family.

The sequence is that of Small ribosomal subunit protein bS21 from Shewanella sp. (strain MR-4).